The following is a 247-amino-acid chain: Segregation and condensation protein A (247 aa).

Belongs to the ScpA family. As to quaternary structure, component of a cohesin-like complex composed of ScpA, ScpB and the Smc homodimer, in which ScpA and ScpB bind to the head domain of Smc. The presence of the three proteins is required for the association of the complex with DNA.

The protein localises to the cytoplasm. Functionally, participates in chromosomal partition during cell division. May act via the formation of a condensin-like complex containing Smc and ScpB that pull DNA away from mid-cell into both cell halves. This is Segregation and condensation protein A from Mycoplasma mobile (strain ATCC 43663 / 163K / NCTC 11711) (Mesomycoplasma mobile).